We begin with the raw amino-acid sequence, 327 residues long: MSEPSPIADPYAYLNIVNNPDGSITRDLSNFPCTAATPDPSPLNPAVSKDLPVNQLKSTWLRLYLPSSAVNEGNVSSQKLPIVVYYHGGGFILCSVDMQLFHDFCSEVARDLNAIVVSPSYRLAPEHRLPAAYDDGVEALDWIKTSDDEWIKSHADFSNVFLMGTSAGGNLAYNVGLRSVDSVSDLSPLQIRGLILHHPFFGGEERSESEIRLMNDQVCPPIVTDVMWDLSLPVGVDRDHEYSNPTVGDGSEKLEKIGRLRWKVMMIGGEDDPMIDLQKDVAKLMKKKGVEVVEHYTGGHVHGAEIRDPSKRKTLFLSIKNFIFSVL.

The short motif at 87–89 (HGG) is the Involved in the stabilization of the negatively charged intermediate by the formation of the oxyanion hole element. Ser-166 serves as the catalytic Nucleophile. Catalysis depends on residues Asp-272 and His-302.

It belongs to the 'GDXG' lipolytic enzyme family. As to expression, expressed in roots, stems, flowers and siliques.

The catalysed reaction is a carboxylic ester + H2O = an alcohol + a carboxylate + H(+). Esterase activity measured in vitro with the synthetic substrate p-nitrophenyl acetate (pNPA) is inhibited by strigolactone. Its function is as follows. Carboxylesterase that possesses esterase activity in vitro with the synthetic substrate p-nitrophenyl acetate (pNPA). Binds strigolactones, but is not able to hydrolyze them. May be involved in the regulation of shoot branching. This is Carboxylesterase 20 from Arabidopsis thaliana (Mouse-ear cress).